Consider the following 547-residue polypeptide: Glucose-6-phosphate isomerase (547 aa).

Residue E351 is the Proton donor of the active site. Catalysis depends on residues H382 and K510.

The protein belongs to the GPI family.

Its subcellular location is the cytoplasm. The catalysed reaction is alpha-D-glucose 6-phosphate = beta-D-fructose 6-phosphate. Its pathway is carbohydrate biosynthesis; gluconeogenesis. It functions in the pathway carbohydrate degradation; glycolysis; D-glyceraldehyde 3-phosphate and glycerone phosphate from D-glucose: step 2/4. Its function is as follows. Catalyzes the reversible isomerization of glucose-6-phosphate to fructose-6-phosphate. This is Glucose-6-phosphate isomerase from Beijerinckia indica subsp. indica (strain ATCC 9039 / DSM 1715 / NCIMB 8712).